Here is a 109-residue protein sequence, read N- to C-terminus: Sperm-specific class P protein 19 (109 aa).

Residues 1–109 (MSLTADPPAC…TVTIPMSATA (109 aa)) form the MSP domain.

As to quaternary structure, monomer. Expressed at higher level in testis.

The protein is Sperm-specific class P protein 19 (ssp-19) of Caenorhabditis elegans.